A 1405-amino-acid chain; its full sequence is Xanthine dehydrogenase (1405 aa).

The 88-residue stretch at N17 to I104 folds into the 2Fe-2S ferredoxin-type domain. [2Fe-2S] cluster contacts are provided by C56, C61, C64, C86, C125, C128, C161, and C163. Positions F288–P474 constitute an FAD-binding PCMH-type domain. Residues I316–I323, F397, T407–N411, D420, I464, and K483 contribute to the FAD site. Mo-molybdopterin-binding residues include Q833 and F864. The substrate site is built by E868 and R946. Residue R978 coordinates Mo-molybdopterin. A substrate-binding site is contributed by F980. A1147 provides a ligand contact to Mo-molybdopterin. The active-site Proton acceptor is E1333.

Belongs to the xanthine dehydrogenase family. Homodimer. Mo-molybdopterin is required as a cofactor. Requires [2Fe-2S] cluster as cofactor. FAD serves as cofactor.

Its subcellular location is the cytoplasm. It catalyses the reaction hypoxanthine + NAD(+) + H2O = xanthine + NADH + H(+). The enzyme catalyses xanthine + NAD(+) + H2O = urate + NADH + H(+). Its pathway is purine metabolism. With respect to regulation, completely inhibited by allopurinol and significantly inhibited by adenine. Inhibited by Fe(2+), Cd(2+) and Zn(2+) and strongly inhibited by Cu(2+). Mg(2+) and Mo(2+) have no effect on activity. Its function is as follows. Key enzyme in purine degradation. Catalyzes the oxidation of hypoxanthine to xanthine. Catalyzes the oxidation of xanthine to uric acid. Oxidizes xanthine, hypoxanthine and pterine at high rates. Can also act on purine and guanine. This Blastobotrys adeninivorans (Yeast) protein is Xanthine dehydrogenase.